A 202-amino-acid polypeptide reads, in one-letter code: Outer-membrane lipoprotein LolB (202 aa).

A signal peptide spans 1–24; that stretch reads MESKEQHLIRQYFILAMFFLFLAG. The N-palmitoyl cysteine moiety is linked to residue Cys-25. Residue Cys-25 is the site of S-diacylglycerol cysteine attachment.

This sequence belongs to the LolB family. In terms of assembly, monomer.

It is found in the cell outer membrane. Its function is as follows. Plays a critical role in the incorporation of lipoproteins in the outer membrane after they are released by the LolA protein. The sequence is that of Outer-membrane lipoprotein LolB from Pseudoalteromonas translucida (strain TAC 125).